Consider the following 129-residue polypeptide: Small ribosomal subunit protein uS11 (129 aa).

Belongs to the universal ribosomal protein uS11 family. As to quaternary structure, part of the 30S ribosomal subunit. Interacts with proteins S7 and S18. Binds to IF-3.

Its function is as follows. Located on the platform of the 30S subunit, it bridges several disparate RNA helices of the 16S rRNA. Forms part of the Shine-Dalgarno cleft in the 70S ribosome. This Marinobacter nauticus (strain ATCC 700491 / DSM 11845 / VT8) (Marinobacter aquaeolei) protein is Small ribosomal subunit protein uS11.